The primary structure comprises 152 residues: Ribosome maturation factor RimP (152 aa).

The protein belongs to the RimP family.

The protein localises to the cytoplasm. In terms of biological role, required for maturation of 30S ribosomal subunits. In Salmonella arizonae (strain ATCC BAA-731 / CDC346-86 / RSK2980), this protein is Ribosome maturation factor RimP.